The primary structure comprises 469 residues: RuvB-like helicase 2 (469 aa).

Residue 73–80 participates in ATP binding; it reads GEPGTGKT.

This sequence belongs to the RuvB family. As to quaternary structure, forms homohexameric rings. May form a dodecamer with rvb1 made of two stacked hexameric rings. Component of the chromatin remodeling Ino80 complex. Component of the RNA polymerase II holoenzyme complex.

The protein localises to the nucleus. The catalysed reaction is ATP + H2O = ADP + phosphate + H(+). Functionally, has double-stranded DNA-stimulated ATPase and ATP-dependent DNA helicase (5' to 3') activity suggesting a role in nuclear processes such as recombination and transcription. Its function is as follows. Proposed core component of the chromatin remodeling Ino80 complex which is involved in transcriptional regulation, DNA replication and probably DNA repair. This Dictyostelium discoideum (Social amoeba) protein is RuvB-like helicase 2 (rvb2).